Here is a 174-residue protein sequence, read N- to C-terminus: Adenylate kinase (174 aa).

Positions 12–41 (STGDMLRAAIKAGTPLGLEAKKIIDEGGLV) are NMP. AMP is bound by residues T13, R18, 39-41 (GLV), 67-70 (GFPR), and Q74. The LID stretch occupies residues 104–141 (GRRVHLASGRTYHVTYNPPKVEGKDDVTGEDLIQRDDD). Residues R105 and 114 to 115 (TY) each bind ATP. AMP contacts are provided by R138 and R149.

Belongs to the adenylate kinase family. As to quaternary structure, monomer.

The protein resides in the cytoplasm. It catalyses the reaction AMP + ATP = 2 ADP. It participates in purine metabolism; AMP biosynthesis via salvage pathway; AMP from ADP: step 1/1. In terms of biological role, catalyzes the reversible transfer of the terminal phosphate group between ATP and AMP. Plays an important role in cellular energy homeostasis and in adenine nucleotide metabolism. This is Adenylate kinase from Neisseria lactamica.